A 130-amino-acid chain; its full sequence is L-ectoine synthase (130 aa).

Belongs to the ectoine synthase family.

The catalysed reaction is (2S)-4-acetamido-2-aminobutanoate = L-ectoine + H2O. It participates in amine and polyamine biosynthesis; ectoine biosynthesis; L-ectoine from L-aspartate 4-semialdehyde: step 3/3. In terms of biological role, catalyzes the circularization of gamma-N-acetyl-alpha,gamma-diaminobutyric acid (ADABA) to ectoine (1,4,5,6-tetrahydro-2-methyl-4-pyrimidine carboxylic acid), which is an excellent osmoprotectant. The polypeptide is L-ectoine synthase (Mycobacteroides abscessus (strain ATCC 19977 / DSM 44196 / CCUG 20993 / CIP 104536 / JCM 13569 / NCTC 13031 / TMC 1543 / L948) (Mycobacterium abscessus)).